The chain runs to 388 residues: Diacylglycerol O-acyltransferase 2 (388 aa).

Residues 1 to 69 (MKTLIAAYSG…NRSKVEKHLQ (69 aa)) are Cytoplasmic-facing. Residues 70-88 (VISVLQWVLSFLVLGVACS) form a helical membrane-spanning segment. Topologically, residues 89–92 (VILM) are lumenal. The helical transmembrane segment at 93-112 (YTFCTDCWLIAALYFTWLAF) threads the bilayer. Residues 113–388 (DWNTPKKGGR…LPETEVLEVN (276 aa)) are Cytoplasmic-facing.

This sequence belongs to the diacylglycerol acyltransferase family. As to quaternary structure, forms multimeric complexes consisting of several DGAT2 subunits. Interacts with SLC27A1 and this interaction is enhanced in the presence of ZFYVE1.

It localises to the endoplasmic reticulum membrane. Its subcellular location is the lipid droplet. The protein resides in the cytoplasm. The protein localises to the perinuclear region. The enzyme catalyses an acyl-CoA + a 1,2-diacyl-sn-glycerol = a triacyl-sn-glycerol + CoA. It catalyses the reaction all-trans-retinol + an acyl-CoA = an all-trans-retinyl ester + CoA. It carries out the reaction 2-(9Z-octadecenoyl)-glycerol + (9Z)-octadecenoyl-CoA = 1,2-di-(9Z-octadecenoyl)-sn-glycerol + CoA. The catalysed reaction is 1,2-di-(9Z-octadecenoyl)-sn-glycerol + (9Z)-octadecenoyl-CoA = 1,2,3-tri-(9Z-octadecenoyl)-glycerol + CoA. The enzyme catalyses all-trans-retinol + hexadecanoyl-CoA = all-trans-retinyl hexadecanoate + CoA. It catalyses the reaction 1-O-(9Z-octadecenyl)-glycerol + (9Z)-octadecenoyl-CoA = 1-O-(9Z-octadecyl)-3-(9Z-octadecenoyl)-glycerol + CoA. It carries out the reaction 1-(9Z-octadecenoyl)-glycerol + (9Z)-octadecenoyl-CoA = 1,2-di-(9Z-octadecenoyl)-glycerol + CoA. The catalysed reaction is 1,2-di-(9Z-octadecenoyl)-sn-glycerol + hexadecanoyl-CoA = 1,2-di-(9Z)-octadecenoyl-3-hexadecanoyl-sn-glycerol + CoA. The enzyme catalyses 1,3-di-(9Z-octadecenoyl)-glycerol + (9Z)-octadecenoyl-CoA = 1,2,3-tri-(9Z-octadecenoyl)-glycerol + CoA. It catalyses the reaction 2,3-di-(9Z)-octadecenoyl-sn-glycerol + (9Z)-octadecenoyl-CoA = 1,2,3-tri-(9Z-octadecenoyl)-glycerol + CoA. It carries out the reaction 2-(9Z-octadecenoyl)-glycerol + hexadecanoyl-CoA = 1-hexadecanoyl-2-(9Z-octadecenoyl)-sn-glycerol + CoA. It functions in the pathway glycerolipid metabolism; triacylglycerol biosynthesis. With respect to regulation, inhibited by niacin. Its function is as follows. Essential acyltransferase that catalyzes the terminal and only committed step in triacylglycerol synthesis by using diacylglycerol and fatty acyl CoA as substrates. Required for synthesis and storage of intracellular triglycerides. Probably plays a central role in cytosolic lipid accumulation. In liver, is primarily responsible for incorporating endogenously synthesized fatty acids into triglycerides. Also functions as an acyl-CoA retinol acyltransferase (ARAT). Also able to use 1-monoalkylglycerol (1-MAkG) as an acyl acceptor for the synthesis of monoalkyl-monoacylglycerol (MAMAG). The chain is Diacylglycerol O-acyltransferase 2 from Rattus norvegicus (Rat).